The sequence spans 249 residues: Coproheme decarboxylase (249 aa).

Fe-coproporphyrin III is bound by residues R131, 145-149 (YPMNK), H172, and Q185. The active site involves Y145.

This sequence belongs to the ChdC family. Type 1 subfamily. Fe-coproporphyrin III is required as a cofactor.

The catalysed reaction is Fe-coproporphyrin III + 2 H2O2 + 2 H(+) = heme b + 2 CO2 + 4 H2O. It carries out the reaction Fe-coproporphyrin III + H2O2 + H(+) = harderoheme III + CO2 + 2 H2O. It catalyses the reaction harderoheme III + H2O2 + H(+) = heme b + CO2 + 2 H2O. It participates in porphyrin-containing compound metabolism; protoheme biosynthesis. Functionally, involved in coproporphyrin-dependent heme b biosynthesis. Catalyzes the decarboxylation of Fe-coproporphyrin III (coproheme) to heme b (protoheme IX), the last step of the pathway. The reaction occurs in a stepwise manner with a three-propionate intermediate. The sequence is that of Coproheme decarboxylase from Staphylococcus carnosus (strain TM300).